A 627-amino-acid polypeptide reads, in one-letter code: MAAATASSPATAAAANSDDEDNYEEYIPVAKRRAMEADRLRRLRLSKPAPPSSSAAEAASDLPPPPPPPPNQPSAGGGGGGLEASAKPSLLVKATQLKRAAPEVTHTEQLIMQEKEMIEHLSDRKTLMSVRELAKGITYSDPLKTGWKPPLRLRRMPRAKADELRRKWHILVDGDDVPPPARDFRDLRLPEPMLRKLREKGIVQPTPIQVQGLPVVLSGRDMIGIAFTGSGKTLVFVLPLIMVALQEEMMMPIVPGEGPFGMIICPSRELAKQTYDVIEQFLVPLKEAGYPEIRPLLCIGGVDMRAQLDVVKKGVHIVVATPGRLKDLLAKKKMNLDNCRYLTLDEADRLVDLGFEDDIREVFDHFKAQRQTLLFSATMPKKIQNFAKSALVKPVIVNVGRAGAANLDVIQEVEYVKEDARIIYLLECLQKTPPPVLVFCENKADVDYIHEYLLLKGVEAVAIHGGKDQEERENAIEFFKNGKKDVLVATDVASKGLDFPDIQHVINYDMPAEIENYVHRIGRTGRCGKTGIATTFINKNQTETTLLDLKHLLKEAKQRIPPVLAELNDPLEDEETMAKESGVKGCAYCGGLGHRVTDCPKLEHQKSMAIAGSRRDYYGGGGYRGEI.

2 stretches are compositionally biased toward low complexity: residues 1 to 15 (MAAATASSPATAAAA) and 52 to 61 (SSSAAEAASD). Disordered stretches follow at residues 1–23 (MAAATASSPATAAAANSDDEDNY) and 40–85 (LRRL…LEAS). Positions 62-72 (LPPPPPPPPNQ) are enriched in pro residues. Positions 182-210 (RDFRDLRLPEPMLRKLREKGIVQPTPIQV) match the Q motif motif. Positions 213–397 (LPVVLSGRDM…KSALVKPVIV (185 aa)) constitute a Helicase ATP-binding domain. 226–233 (AFTGSGKT) contacts ATP. A DEAD box motif is present at residues 345 to 348 (DEAD). Positions 408 to 568 (DVIQEVEYVK…RIPPVLAELN (161 aa)) constitute a Helicase C-terminal domain. The CCHC-type zinc finger occupies 584–601 (KGCAYCGGLGHRVTDCPK).

Belongs to the DEAD box helicase family. DDX41 subfamily.

It catalyses the reaction ATP + H2O = ADP + phosphate + H(+). The sequence is that of DEAD-box ATP-dependent RNA helicase 35A from Oryza sativa subsp. japonica (Rice).